The following is a 337-amino-acid chain: DNA-directed RNA polymerase subunit alpha (337 aa).

Residues 1-233 (MVREKVTVST…DLFIPFLHME (233 aa)) are alpha N-terminal domain (alpha-NTD). The tract at residues 264–337 (NKKIALKSIF…FVIDLAKNKF (74 aa)) is alpha C-terminal domain (alpha-CTD).

It belongs to the RNA polymerase alpha chain family. In plastids the minimal PEP RNA polymerase catalytic core is composed of four subunits: alpha, beta, beta', and beta''. When a (nuclear-encoded) sigma factor is associated with the core the holoenzyme is formed, which can initiate transcription.

It localises to the plastid. It is found in the chloroplast. It catalyses the reaction RNA(n) + a ribonucleoside 5'-triphosphate = RNA(n+1) + diphosphate. DNA-dependent RNA polymerase catalyzes the transcription of DNA into RNA using the four ribonucleoside triphosphates as substrates. The chain is DNA-directed RNA polymerase subunit alpha from Atropa belladonna (Belladonna).